We begin with the raw amino-acid sequence, 428 residues long: GTPase Obg (428 aa).

Positions 1-158 (MFVDQVKIYV…RYVTLELKLL (158 aa)) constitute an Obg domain. One can recognise an OBG-type G domain in the interval 159-329 (ADVGLVGFPS…LLFAIADLLE (171 aa)). Residues 165–172 (GFPSVGKS), 190–194 (FTTIV), 212–215 (DLPG), 282–285 (NKMD), and 310–312 (SAV) contribute to the GTP site. S172 and T192 together coordinate Mg(2+). Residues 350 to 428 (KLEKEEAPFH…LLNYEFEFVD (79 aa)) enclose the OCT domain.

This sequence belongs to the TRAFAC class OBG-HflX-like GTPase superfamily. OBG GTPase family. In terms of assembly, monomer. Mg(2+) is required as a cofactor.

The protein localises to the cytoplasm. In terms of biological role, an essential GTPase which binds GTP, GDP and possibly (p)ppGpp with moderate affinity, with high nucleotide exchange rates and a fairly low GTP hydrolysis rate. Plays a role in control of the cell cycle, stress response, ribosome biogenesis and in those bacteria that undergo differentiation, in morphogenesis control. This Anoxybacillus flavithermus (strain DSM 21510 / WK1) protein is GTPase Obg.